Reading from the N-terminus, the 572-residue chain is Golgi apyrase (572 aa).

The Lumenal segment spans residues 1 to 470 (MVRKYGIFID…KHWMRLFPNK (470 aa)). Glutamate 145 functions as the Proton acceptor in the catalytic mechanism. Residues 471–491 (LFFILSFIFCLFFLFSLVLFG) form a helical membrane-spanning segment. Residues 492–572 (YDPKRRQRFK…RERTPRSPFP (81 aa)) are Cytoplasmic-facing.

Belongs to the GDA1/CD39 NTPase family. It depends on Ca(2+) as a cofactor. Requires Mg(2+) as cofactor. The cofactor is Mn(2+).

Its subcellular location is the golgi apparatus. The protein resides in the membrane. It catalyses the reaction a ribonucleoside 5'-triphosphate + 2 H2O = a ribonucleoside 5'-phosphate + 2 phosphate + 2 H(+). The protein operates within protein modification; protein glycosylation. In terms of biological role, catalyzes the hydrolysis of phosphoanhydride bonds of nucleoside tri- and di-phosphates. Required for Golgi glycosylation and cell wall integrity. Involved in N-mannosylation of proteins in Golgi. The protein is Golgi apyrase of Schizosaccharomyces pombe (strain 972 / ATCC 24843) (Fission yeast).